The primary structure comprises 438 residues: UDP-N-acetylmuramoylalanine--D-glutamate ligase (438 aa).

Position 115–121 (115–121) interacts with ATP; that stretch reads GSNGKST.

The protein belongs to the MurCDEF family.

The protein resides in the cytoplasm. It catalyses the reaction UDP-N-acetyl-alpha-D-muramoyl-L-alanine + D-glutamate + ATP = UDP-N-acetyl-alpha-D-muramoyl-L-alanyl-D-glutamate + ADP + phosphate + H(+). The protein operates within cell wall biogenesis; peptidoglycan biosynthesis. Functionally, cell wall formation. Catalyzes the addition of glutamate to the nucleotide precursor UDP-N-acetylmuramoyl-L-alanine (UMA). The protein is UDP-N-acetylmuramoylalanine--D-glutamate ligase of Vibrio atlanticus (strain LGP32) (Vibrio splendidus (strain Mel32)).